We begin with the raw amino-acid sequence, 359 residues long: Heme A synthase (359 aa).

5 helical membrane passes run 8–28, 94–114, 124–144, 159–179, and 215–235; these read IMSI…VVGG, LLGR…YYLK, LLLI…MVKS, GHLL…LIII, and IIIF…GLDA. Histidine 274 is a binding site for heme. The next 3 membrane-spanning stretches (helical) occupy residues 276–296, 303–323, and 328–348; these read WFGI…IILN, MGMV…ITLV, and ILAA…FLFI. A heme-binding site is contributed by histidine 334.

The protein belongs to the COX15/CtaA family. Type 2 subfamily. Interacts with CtaB. Heme b is required as a cofactor.

It is found in the cell membrane. The catalysed reaction is Fe(II)-heme o + 2 A + H2O = Fe(II)-heme a + 2 AH2. Its pathway is porphyrin-containing compound metabolism; heme A biosynthesis; heme A from heme O: step 1/1. Its function is as follows. Catalyzes the conversion of heme O to heme A by two successive hydroxylations of the methyl group at C8. The first hydroxylation forms heme I, the second hydroxylation results in an unstable dihydroxymethyl group, which spontaneously dehydrates, resulting in the formyl group of heme A. The chain is Heme A synthase from Orientia tsutsugamushi (strain Ikeda) (Rickettsia tsutsugamushi).